Reading from the N-terminus, the 204-residue chain is Phosphoribosyl-dephospho-CoA transferase (204 aa).

Residues aspartate 129 and aspartate 131 contribute to the active site.

The protein belongs to the MdcG family.

The catalysed reaction is apo-[malonate decarboxylase ACP] + 2'-(5''-triphospho-alpha-D-ribosyl)-3'-dephospho-CoA = holo-[malonate decarboxylase ACP] + diphosphate. Functionally, transfers 2'-(5-triphosphoribosyl)-3'-dephosphocoenzyme-A to the apo-[acyl-carrier-protein] of the malonate decarboxylase to yield holo-[acyl-carrier-protein]. This Pseudomonas putida (strain W619) protein is Phosphoribosyl-dephospho-CoA transferase.